The following is a 39-amino-acid chain: Photosystem II reaction center protein L (39 aa).

Residues 18–38 (SLYLGLLLTFVMGILFSSYFF) traverse the membrane as a helical segment.

This sequence belongs to the PsbL family. In terms of assembly, PSII is composed of 1 copy each of membrane proteins PsbA, PsbB, PsbC, PsbD, PsbE, PsbF, PsbH, PsbI, PsbJ, PsbK, PsbL, PsbM, PsbT, PsbX, PsbY, Psb30/Ycf12, peripheral proteins PsbO, CyanoQ (PsbQ), PsbU, PsbV and a large number of cofactors. It forms dimeric complexes.

The protein resides in the cellular thylakoid membrane. One of the components of the core complex of photosystem II (PSII). PSII is a light-driven water:plastoquinone oxidoreductase that uses light energy to abstract electrons from H(2)O, generating O(2) and a proton gradient subsequently used for ATP formation. It consists of a core antenna complex that captures photons, and an electron transfer chain that converts photonic excitation into a charge separation. This subunit is found at the monomer-monomer interface and is required for correct PSII assembly and/or dimerization. The sequence is that of Photosystem II reaction center protein L from Prochlorococcus marinus (strain MIT 9211).